Consider the following 172-residue polypeptide: Adenine phosphoribosyltransferase (172 aa).

The protein belongs to the purine/pyrimidine phosphoribosyltransferase family. Homodimer.

The protein localises to the cytoplasm. It carries out the reaction AMP + diphosphate = 5-phospho-alpha-D-ribose 1-diphosphate + adenine. The protein operates within purine metabolism; AMP biosynthesis via salvage pathway; AMP from adenine: step 1/1. Functionally, catalyzes a salvage reaction resulting in the formation of AMP, that is energically less costly than de novo synthesis. The protein is Adenine phosphoribosyltransferase of Picosynechococcus sp. (strain ATCC 27264 / PCC 7002 / PR-6) (Agmenellum quadruplicatum).